A 202-amino-acid chain; its full sequence is Precorrin-2 dehydrogenase (202 aa).

Residues 20-21 and 41-42 contribute to the NAD(+) site; these read TI and PT.

This sequence belongs to the precorrin-2 dehydrogenase / sirohydrochlorin ferrochelatase family. Homodimer.

It carries out the reaction precorrin-2 + NAD(+) = sirohydrochlorin + NADH + 2 H(+). The protein operates within cofactor biosynthesis; adenosylcobalamin biosynthesis; sirohydrochlorin from precorrin-2: step 1/1. Its pathway is porphyrin-containing compound metabolism; siroheme biosynthesis; sirohydrochlorin from precorrin-2: step 1/1. In terms of biological role, catalyzes the dehydrogenation of precorrin-2 to form sirohydrochlorin which is used as a precursor in both siroheme biosynthesis and in the anaerobic branch of adenosylcobalamin biosynthesis. It is unable to oxidize precorrin-3. The polypeptide is Precorrin-2 dehydrogenase (sirC) (Priestia megaterium (Bacillus megaterium)).